We begin with the raw amino-acid sequence, 793 residues long: Toll-like receptor 2 type-1 (793 aa).

Positions 1–25 are cleaved as a signal peptide; that stretch reads MFNQSKQKPTMKLMWQAWLIYTALA. The Extracellular portion of the chain corresponds to 26-597; sequence AHLPEEQALR…QLSLMECHRS (572 aa). Cys-41 and Cys-47 are oxidised to a cystine. Residue Asn-48 is glycosylated (N-linked (GlcNAc...) asparagine). LRR repeat units lie at residues 64-85, 88-109, 112-133, 136-157, 161-182, and 185-206; these read KITV…DLQK, NLRT…SFGS, KLEL…WFGP, SLQH…SPFS, NLSS…NFEG, and FLNT…SLKS. A glycan (N-linked (GlcNAc...) asparagine) is linked at Asn-120. 4 N-linked (GlcNAc...) asparagine glycosylation sites follow: Asn-161, Asn-195, Asn-254, and Asn-325. Cys-362 and Cys-391 are disulfide-bonded. LRR repeat units follow at residues 370–391, 397–418, 423–444, 446–467, 468–486, 487–508, and 509–530; these read SLLY…ETIC, SLQT…ARYI, KLIN…CEWP, NLKY…IPST, LEVL…LQLP, FLKE…TDIP, and NLVA…EFES. N-linked (GlcNAc...) asparagine glycosylation is present at Asn-402. Residues Cys-441 and Cys-463 are joined by a disulfide bond. A glycan (N-linked (GlcNAc...) asparagine) is linked at Asn-451. Residues 542-596 enclose the LRRCT domain; that stretch reads NNFICSCEFLSFIHHEAGIAQVLVGWPESYICDSPLTVRGAQVGSVQLSLMECHR. A helical transmembrane segment spans residues 598 to 618; the sequence is LLVSLICTLVFLFILILVVVG. Residues 619–793 lie on the Cytoplasmic side of the membrane; sequence YKYHAVWYMR…WENLKAALKS (175 aa). One can recognise a TIR domain in the interval 648-791; sequence ICYDAFVSYS…MFWENLKAAL (144 aa).

The protein belongs to the Toll-like receptor family. Binds MYD88 (via TIR domain). In terms of processing, N-glycosylated. TLR2-1 is more heavily glycosylated than TLR2-2. As to expression, highly expressed in ovary. Detected at lower levels in heart, lung, gizzard and testis.

Its subcellular location is the membrane. In terms of biological role, participates in the innate immune response to microbial agents. Acts via MYD88 and TRAF6, leading to NF-kappa-B activation, cytokine secretion and the inflammatory response. Does not respond to LPS and responds with less ability than TLR2-2 to mycoplasmal macrophage-activating lipopeptide-2kD (MALP-2). The protein is Toll-like receptor 2 type-1 (TLR2-1) of Gallus gallus (Chicken).